We begin with the raw amino-acid sequence, 463 residues long: 4-hydroxybenzoate polyprenyltransferase, mitochondrial (463 aa).

2 disordered regions span residues 28 to 48 and 133 to 152; these read NNNTNNNNNNNGINKYNSTFN and LLDDNNSNSNNNNNSNNNKP. A compositionally biased stretch (low complexity) spans 137-150; it reads NNSNSNNNNNSNNN. Transmembrane regions (helical) follow at residues 181–201, 206–226, 257–277, 305–325, 330–350, 375–395, and 431–451; these read IGVWLLLYPCCWSISLAAPAG, LKTMLVFGIGAYVMRSAGCVI, LIFLGGQLLASFGLILSSLNY, FVLGLAFNWGALAGYSAIAGS, IVAPLYLAGISWTMVYDTIYA, IILSVFSGLVISGMFLTGIAA, and FISNKNFGLYFLLIIIVSKLL.

The protein belongs to the UbiA prenyltransferase family. Requires Mg(2+) as cofactor.

Its subcellular location is the mitochondrion inner membrane. The enzyme catalyses an all-trans-polyprenyl diphosphate + 4-hydroxybenzoate = a 4-hydroxy-3-(all-trans-polyprenyl)benzoate + diphosphate. It functions in the pathway cofactor biosynthesis; ubiquinone biosynthesis. In terms of biological role, catalyzes the prenylation of para-hydroxybenzoate (PHB) with an all-trans polyprenyl group. Mediates the second step in the final reaction sequence of coenzyme Q (CoQ) biosynthesis, which is the condensation of the polyisoprenoid side chain with PHB. Its function is as follows. Catalyzes the prenylation of para-hydroxybenzoate (PHB) with an all-trans polyprenyl group. Mediates the second step in the final reaction sequence of coenzyme Q (CoQ) biosynthesis, which is the condensation of the polyisoprenoid side chain with PHB, generating the first membrane-bound Q intermediate. The sequence is that of 4-hydroxybenzoate polyprenyltransferase, mitochondrial from Dictyostelium discoideum (Social amoeba).